Here is a 249-residue protein sequence, read N- to C-terminus: Cysteine desulfuration protein SufE (249 aa).

Residue cysteine 154 is the Cysteine persulfide intermediate of the active site.

It belongs to the SufE family. As to quaternary structure, monomer. Interacts with SufS; interaction enhances cysteine desulfurase activity of SufS. Post-translationally, proteolytically cleaved.

Its subcellular location is the plastid. It localises to the apicoplast. It functions in the pathway cofactor biosynthesis; iron-sulfur cluster biosynthesis. In terms of biological role, participates in sulfur mobilization (SUF) pathway for iron-sulfur (Fe-S) cluster biogenesis. Enhances cysteine desulfurase activity of SufS. Probably functions as a sulfur acceptor for SufS. This Plasmodium falciparum (isolate 3D7) protein is Cysteine desulfuration protein SufE.